Reading from the N-terminus, the 428-residue chain is Glutamine synthetase leaf isozyme, chloroplastic (428 aa).

A chloroplast-targeting transit peptide spans 1–49 (MAQILAPSIQCQTRITKTSPLATPISSKMWSSLVMKQNKKVARSAKFRV). The region spanning 75–155 (IIAEYIWIGG…VICDAYTPQG (81 aa)) is the GS beta-grasp domain. One can recognise a GS catalytic domain in the interval 159–428 (PTNKRHKAAE…LAAQKIALKV (270 aa)).

This sequence belongs to the glutamine synthetase family. Homooctamer.

The protein localises to the plastid. The protein resides in the chloroplast. The enzyme catalyses L-glutamate + NH4(+) + ATP = L-glutamine + ADP + phosphate + H(+). In terms of biological role, the light-modulated chloroplast enzyme, encoded by a nuclear gene and expressed primarily in leaves, is responsible for the reassimilation of the ammonia generated by photorespiration. The protein is Glutamine synthetase leaf isozyme, chloroplastic (GS2) of Medicago sativa (Alfalfa).